Here is a 250-residue protein sequence, read N- to C-terminus: Thiamine thiazole synthase (250 aa).

Residues S36, 55–56 (EE), G63, V126, and 152–154 (HVD) contribute to the NAD(+) site. Fe cation is bound by residues D154 and H169. M216 provides a ligand contact to NAD(+). R226 contributes to the glycine binding site.

It belongs to the THI4 family. In terms of assembly, homooctamer; tetramer of dimers. Fe(2+) is required as a cofactor.

It carries out the reaction hydrogen sulfide + glycine + NAD(+) = ADP-5-ethyl-4-methylthiazole-2-carboxylate + nicotinamide + 3 H2O + H(+). It participates in cofactor biosynthesis; thiamine diphosphate biosynthesis. Its function is as follows. Involved in the biosynthesis of the thiazole moiety of thiamine. Catalyzes the conversion of NAD and glycine to adenosine diphosphate 5-(2-hydroxyethyl)-4-methylthiazole-2-carboxylate (ADT), an adenylated thiazole intermediate, using free sulfide as a source of sulfur. The polypeptide is Thiamine thiazole synthase (Thermotoga maritima (strain ATCC 43589 / DSM 3109 / JCM 10099 / NBRC 100826 / MSB8)).